The primary structure comprises 217 residues: N-(5'-phosphoribosyl)anthranilate isomerase (217 aa).

This sequence belongs to the TrpF family.

The catalysed reaction is N-(5-phospho-beta-D-ribosyl)anthranilate = 1-(2-carboxyphenylamino)-1-deoxy-D-ribulose 5-phosphate. The protein operates within amino-acid biosynthesis; L-tryptophan biosynthesis; L-tryptophan from chorismate: step 3/5. The polypeptide is N-(5'-phosphoribosyl)anthranilate isomerase (Chlorobium phaeovibrioides (strain DSM 265 / 1930) (Prosthecochloris vibrioformis (strain DSM 265))).